The chain runs to 194 residues: Thymidylate kinase (194 aa).

7 to 14 (GVDCVGKS) contributes to the ATP binding site.

It belongs to the thymidylate kinase family.

The enzyme catalyses dTMP + ATP = dTDP + ADP. In terms of biological role, phosphorylation of dTMP to form dTDP in both de novo and salvage pathways of dTTP synthesis. The chain is Thymidylate kinase from Campylobacter lari (strain RM2100 / D67 / ATCC BAA-1060).